Consider the following 433-residue polypeptide: Putative zinc metalloprotease BB_0118 (433 aa).

Position 17 (His17) interacts with Zn(2+). The active site involves Glu18. A Zn(2+)-binding site is contributed by His21. Residues 98–120 (ILIYFAGPLFNLIFSFIVFIFIS) traverse the membrane as a helical segment. The 73-residue stretch at 193-265 (TVSLQDFLKE…VVEIKFSRNG (73 aa)) folds into the PDZ domain. The next 3 helical transmembrane spans lie at 334-356 (VSGP…LYWI), 366-388 (LAGM…FISF), and 401-423 (TIYS…GLFN).

It belongs to the peptidase M50B family. Requires Zn(2+) as cofactor.

Its subcellular location is the cell inner membrane. The polypeptide is Putative zinc metalloprotease BB_0118 (Borreliella burgdorferi (strain ATCC 35210 / DSM 4680 / CIP 102532 / B31) (Borrelia burgdorferi)).